A 300-amino-acid chain; its full sequence is Fructose-bisphosphate aldolase class 1 (300 aa).

E181 serves as the catalytic Proton acceptor. The active-site Schiff-base intermediate with dihydroxyacetone-P is the K218.

Belongs to the class I fructose-bisphosphate aldolase family.

It catalyses the reaction beta-D-fructose 1,6-bisphosphate = D-glyceraldehyde 3-phosphate + dihydroxyacetone phosphate. It participates in carbohydrate degradation; glycolysis; D-glyceraldehyde 3-phosphate and glycerone phosphate from D-glucose: step 4/4. The protein is Fructose-bisphosphate aldolase class 1 (fda) of Synechocystis sp. (strain ATCC 27184 / PCC 6803 / Kazusa).